A 280-amino-acid polypeptide reads, in one-letter code: Large ribosomal subunit protein uL2 (280 aa).

Disordered stretches follow at residues 1-58 and 226-280; these read MAIR…GGGH and MNPV…KHGR. Composition is skewed to basic residues over residues 37–58 and 268–280; these read LHGHGGRNAHGRITTRHKGGGH and IVRRRRTGKKHGR.

It belongs to the universal ribosomal protein uL2 family. As to quaternary structure, part of the 50S ribosomal subunit. Forms a bridge to the 30S subunit in the 70S ribosome.

One of the primary rRNA binding proteins. Required for association of the 30S and 50S subunits to form the 70S ribosome, for tRNA binding and peptide bond formation. It has been suggested to have peptidyltransferase activity; this is somewhat controversial. Makes several contacts with the 16S rRNA in the 70S ribosome. This chain is Large ribosomal subunit protein uL2, found in Mycobacterium avium (strain 104).